A 480-amino-acid chain; its full sequence is Glycogen synthase (480 aa).

K15 contacts ADP-alpha-D-glucose.

Belongs to the glycosyltransferase 1 family. Bacterial/plant glycogen synthase subfamily.

It catalyses the reaction [(1-&gt;4)-alpha-D-glucosyl](n) + ADP-alpha-D-glucose = [(1-&gt;4)-alpha-D-glucosyl](n+1) + ADP + H(+). It participates in glycan biosynthesis; glycogen biosynthesis. Functionally, synthesizes alpha-1,4-glucan chains using ADP-glucose. The protein is Glycogen synthase of Opitutus terrae (strain DSM 11246 / JCM 15787 / PB90-1).